Consider the following 559-residue polypeptide: Potassium-transporting ATPase potassium-binding subunit (559 aa).

The next 13 helical transmembrane spans lie at 5–25 (GFLL…PLGS), 27–47 (LARL…RILW), 63–83 (LLAL…LLFW), 132–152 (GLTV…FALI), 170–190 (LVRI…LFFI), 253–273 (LAQM…FGEA), 283–303 (LLWA…WAEV), 327–347 (FGVL…CGAV), 356–376 (ALGG…FGGV), 379–399 (GLYG…LMIG), 416–436 (MTAL…ALAM), 484–504 (LLAF…MAIA), and 524–544 (GALF…LTFI).

The protein belongs to the KdpA family. In terms of assembly, the system is composed of three essential subunits: KdpA, KdpB and KdpC.

Its subcellular location is the cell inner membrane. Its function is as follows. Part of the high-affinity ATP-driven potassium transport (or Kdp) system, which catalyzes the hydrolysis of ATP coupled with the electrogenic transport of potassium into the cytoplasm. This subunit binds the periplasmic potassium ions and delivers the ions to the membrane domain of KdpB through an intramembrane tunnel. The sequence is that of Potassium-transporting ATPase potassium-binding subunit from Salmonella typhi.